A 359-amino-acid polypeptide reads, in one-letter code: ELAV-like protein 2 (359 aa).

The disordered stretch occupies residues 1-39; sequence METQLSNGPTCNNTANGPTTVNNNCSSPVDSGNTEDSKT. 2 consecutive RRM domains span residues 39 to 117 and 125 to 205; these read TNLI…YARP and ANLY…FANN. At S221 the chain carries Phosphoserine. The RRM 3 domain maps to 276–354; the sequence is WCIFVYNLAP…RVLQVSFKTN (79 aa).

Belongs to the RRM elav family. Interacts with IGF2BP1. Interacts with MAP1B light chain LC1.

Functionally, RNA-binding protein that binds to the 3' untranslated region (3'UTR) of target mRNAs. Seems to recognize a GAAA motif. Can bind to its own 3'UTR, the FOS 3'UTR and the ID 3'UTR. This Rattus norvegicus (Rat) protein is ELAV-like protein 2 (Elavl2).